We begin with the raw amino-acid sequence, 161 residues long: Nucleotide-binding protein Pfl01_4421 (161 aa).

Belongs to the YajQ family.

Nucleotide-binding protein. The chain is Nucleotide-binding protein Pfl01_4421 from Pseudomonas fluorescens (strain Pf0-1).